We begin with the raw amino-acid sequence, 538 residues long: Cytochrome c-552 (538 aa).

The signal sequence occupies residues 1-55 (MKIYLRFVWILIIILNFLLNLFITTNGVIIVNAFKKSLIVAASFASLSLFNSATA). H133 contacts heme c. 3 residues coordinate heme: C161, C164, and K165. The heme c site is built by C199, C202, H203, C264, C267, and H268. Ca(2+)-binding residues include E270, Y271, K316, and Q318. Y271 serves as a coordination point for substrate. Residue H319 coordinates substrate. Heme c is bound by residues H330, C337, C340, H341, H356, C369, C372, H373, and H448.

It belongs to the cytochrome c-552 family. Ca(2+) serves as cofactor. Heme c is required as a cofactor.

The protein localises to the periplasm. The enzyme catalyses 6 Fe(III)-[cytochrome c] + NH4(+) + 2 H2O = 6 Fe(II)-[cytochrome c] + nitrite + 8 H(+). It participates in nitrogen metabolism; nitrate reduction (assimilation). Its function is as follows. Catalyzes the reduction of nitrite to ammonia, consuming six electrons in the process. This Haemophilus influenzae (strain 86-028NP) protein is Cytochrome c-552.